Here is a 500-residue protein sequence, read N- to C-terminus: Glutamyl-tRNA(Gln) amidotransferase subunit A (500 aa).

Active-site charge relay system residues include lysine 81 and serine 161. Residue serine 185 is the Acyl-ester intermediate of the active site.

This sequence belongs to the amidase family. GatA subfamily. As to quaternary structure, heterotrimer of A, B and C subunits.

The catalysed reaction is L-glutamyl-tRNA(Gln) + L-glutamine + ATP + H2O = L-glutaminyl-tRNA(Gln) + L-glutamate + ADP + phosphate + H(+). Its function is as follows. Allows the formation of correctly charged Gln-tRNA(Gln) through the transamidation of misacylated Glu-tRNA(Gln) in organisms which lack glutaminyl-tRNA synthetase. The reaction takes place in the presence of glutamine and ATP through an activated gamma-phospho-Glu-tRNA(Gln). In Rhodospirillum rubrum (strain ATCC 11170 / ATH 1.1.1 / DSM 467 / LMG 4362 / NCIMB 8255 / S1), this protein is Glutamyl-tRNA(Gln) amidotransferase subunit A.